The chain runs to 1223 residues: WD repeat-containing protein 11 (1223 aa).

WD repeat units lie at residues 59 to 108 (KHKA…AQCE) and 111 to 154 (EHVK…KLWK). Residues S205 and S209 each carry the phosphoserine modification. Residues 354–393 (KTVRPFSMVCCPVNENAAALIVSDGRVMIWELKSAVCSRN) form a WD 3 repeat. A phosphoserine mark is found at S401 and S405. 6 WD repeats span residues 470–509 (RMCP…LHKE), 565–604 (NDES…LLRE), 707–744 (GSMG…SRGI), 746–786 (THRS…MVSS), 792–830 (NVTF…TCFR), and 892–939 (ALSN…HSLS).

As to quaternary structure, component of the complex WDR11 composed of C17orf75, FAM91A1 and WDR11; FAM91A1 and WDR11 are required for proper location of the complex. Interacts with GLI3; the interaction associateS EMX1 with GLI3. Interacts with TBC1D23; this interaction may be indirect and recruits TBC1D23 to AP-1-derived vesicles. Interacts (via the N-terminal and the central portion of the protein) with EMX1. Broadly expressed in various organs including brain, eye,ear, lung, heart, kideny and gonads. Cerebral cortex. The entire developing central nervous system, except for the spinal cord, reveals expression. Expressed in the neuroepithelium, including the diencephalic region that gives rise to hypothalamic neurons. In the adult brain, intense expression is restricted to the olfactory bulb, the olfaction-related piriform cortex, the granule cell layer of the cerebellum, and neurons of the hippocampal formation. The brain demonstrated expression scattered throughout the hypothalamus, sometimes in clusters of neurons.

The protein localises to the cytoplasm. It localises to the cytoskeleton. Its subcellular location is the cilium basal body. The protein resides in the nucleus. It is found in the cilium axoneme. The protein localises to the cytoplasmic vesicle. It localises to the golgi apparatus. Its subcellular location is the trans-Golgi network. Functionally, involved in the Hedgehog (Hh) signaling pathway, is essential for normal ciliogenesis. Regulates the proteolytic processing of GLI3 and cooperates with the transcription factor EMX1 in the induction of downstream Hh pathway gene expression and gonadotropin-releasing hormone production. WDR11 complex facilitates the tethering of Adaptor protein-1 complex (AP-1)-derived vesicles. WDR11 complex acts together with TBC1D23 to facilitate the golgin-mediated capture of vesicles generated using AP-1. The polypeptide is WD repeat-containing protein 11 (Wdr11) (Mus musculus (Mouse)).